The following is an 848-amino-acid chain: Leucine--tRNA ligase (848 aa).

Residues 1–21 (MTENTPGTSAPERFDPATADT) are disordered. Positions 51-61 (PYPSGRIHIGH) match the 'HIGH' region motif. The 'KMSKS' region signature appears at 625–629 (KMSKS). Residue K628 participates in ATP binding.

The protein belongs to the class-I aminoacyl-tRNA synthetase family.

The protein localises to the cytoplasm. It catalyses the reaction tRNA(Leu) + L-leucine + ATP = L-leucyl-tRNA(Leu) + AMP + diphosphate. This is Leucine--tRNA ligase from Novosphingobium aromaticivorans (strain ATCC 700278 / DSM 12444 / CCUG 56034 / CIP 105152 / NBRC 16084 / F199).